The primary structure comprises 202 residues: Na(+)-translocating NADH-quinone reductase subunit E (202 aa).

The next 6 helical transmembrane spans lie at 11–31 (SVFV…FLAI), 35–55 (IDAA…TVPV), 81–101 (FLGL…MEMV), 114–134 (GVFL…LLMV), 144–164 (VVFG…LAGI), and 182–202 (ITFI…GIAL).

This sequence belongs to the NqrDE/RnfAE family. As to quaternary structure, composed of six subunits; NqrA, NqrB, NqrC, NqrD, NqrE and NqrF.

The protein localises to the cell inner membrane. It carries out the reaction a ubiquinone + n Na(+)(in) + NADH + H(+) = a ubiquinol + n Na(+)(out) + NAD(+). Its function is as follows. NQR complex catalyzes the reduction of ubiquinone-1 to ubiquinol by two successive reactions, coupled with the transport of Na(+) ions from the cytoplasm to the periplasm. NqrA to NqrE are probably involved in the second step, the conversion of ubisemiquinone to ubiquinol. The polypeptide is Na(+)-translocating NADH-quinone reductase subunit E (Saccharophagus degradans (strain 2-40 / ATCC 43961 / DSM 17024)).